The sequence spans 556 residues: Sphingomyelinase C (556 aa).

The N-terminal stretch at 1–27 is a signal peptide; it reads MRIKKYTKVRLLVNCCLLLFFLIDCGA.

It localises to the secreted. It catalyses the reaction a sphingomyelin + H2O = phosphocholine + an N-acylsphing-4-enine + H(+). The chain is Sphingomyelinase C (sph) from Leptospira interrogans.